Consider the following 320-residue polypeptide: Meso-diaminopimelate D-dehydrogenase (320 aa).

NADP(+) is bound by residues 11–14 (YGNL), 35–37 (SRR), 65–68 (CMGS), 88–90 (TYD), and 117–121 (TGWDP). Residues aspartate 90, aspartate 120, tryptophan 144, 150-151 (QG), threonine 169, arginine 195, histidine 244, and asparagine 270 contribute to the substrate site.

Homodimer.

The catalysed reaction is meso-2,6-diaminopimelate + NADP(+) + H2O = (S)-2-amino-6-oxoheptanedioate + NH4(+) + NADPH + H(+). The protein operates within amino-acid biosynthesis; L-lysine biosynthesis via DAP pathway; DL-2,6-diaminopimelate from (S)-tetrahydrodipicolinate: step 1/1. Its activity is regulated as follows. L,L-2,6-diaminopimelate and D,D-2,6-diaminopimelate competitively inhibit the oxidative deamination of meso-2,6-diaminopimelate. The enzyme is also inhibited by L-cysteine, and by p-chloromercuribenzoate, iodoacetic acid and HgCl(2) in vitro. Functionally, catalyzes the reversible NADPH-dependent reductive amination of L-2-amino-6-oxopimelate, the acyclic form of L-tetrahydrodipicolinate, to generate the meso compound, D,L-2,6-diaminopimelate. Probably plays a role in lysine biosynthesis. Exhibits a high substrate specificity for meso-2,6-diaminopimelate, since L,L-2,6-diaminopimelate, D,D-2,6-diaminopimelate, L-glutamate, L-alanine, L-leucine, L-valine, L-aspartate, L-threonine, L-homoserine, L-methionine, L-lysine, L-serine, L-phenylalanine, L-tyrosine, L-tryptophan, L-ornithine, L-histidine, L-arginine, D-glutamate, and D-alanine are not substrates for the oxidative deamination reaction. Can use NAD(+) only poorly since the activity observed in the presence of NAD(+) is about 3% of that with NADP(+). This is Meso-diaminopimelate D-dehydrogenase (ddh) from Corynebacterium glutamicum (strain ATCC 13032 / DSM 20300 / JCM 1318 / BCRC 11384 / CCUG 27702 / LMG 3730 / NBRC 12168 / NCIMB 10025 / NRRL B-2784 / 534).